A 44-amino-acid polypeptide reads, in one-letter code: Photosystem II reaction center protein K (44 aa).

Positions 1-7 (METLLLS) are excised as a propeptide. A helical transmembrane segment spans residues 23–43 (LPIIPVFFLLLAFVWQAAIGF).

This sequence belongs to the PsbK family. In terms of assembly, PSII is composed of 1 copy each of membrane proteins PsbA, PsbB, PsbC, PsbD, PsbE, PsbF, PsbH, PsbI, PsbJ, PsbK, PsbL, PsbM, PsbT, PsbX, PsbY, PsbZ, Psb30/Ycf12, at least 3 peripheral proteins of the oxygen-evolving complex and a large number of cofactors. It forms dimeric complexes.

It localises to the plastid. The protein resides in the chloroplast thylakoid membrane. Its function is as follows. One of the components of the core complex of photosystem II (PSII). PSII is a light-driven water:plastoquinone oxidoreductase that uses light energy to abstract electrons from H(2)O, generating O(2) and a proton gradient subsequently used for ATP formation. It consists of a core antenna complex that captures photons, and an electron transfer chain that converts photonic excitation into a charge separation. The chain is Photosystem II reaction center protein K from Phaeodactylum tricornutum (strain CCAP 1055/1).